A 279-amino-acid chain; its full sequence is S-methyl-5'-thioadenosine phosphorylase (279 aa).

Phosphate contacts are provided by residues Ser-28, 70–71 (RH), and 103–104 (SA). Met-202 lines the substrate pocket. Position 203 (Thr-203) interacts with phosphate. A substrate-binding site is contributed by 226–228 (DYD).

The protein belongs to the PNP/MTAP phosphorylase family. MTAP subfamily. Homohexamer. Dimer of a homotrimer.

The enzyme catalyses S-methyl-5'-thioadenosine + phosphate = 5-(methylsulfanyl)-alpha-D-ribose 1-phosphate + adenine. The protein operates within amino-acid biosynthesis; L-methionine biosynthesis via salvage pathway; S-methyl-5-thio-alpha-D-ribose 1-phosphate from S-methyl-5'-thioadenosine (phosphorylase route): step 1/1. In terms of biological role, catalyzes the reversible phosphorylation of S-methyl-5'-thioadenosine (MTA) to adenine and 5-methylthioribose-1-phosphate. Involved in the breakdown of MTA, a major by-product of polyamine biosynthesis. Responsible for the first step in the methionine salvage pathway after MTA has been generated from S-adenosylmethionine. Has broad substrate specificity with 6-aminopurine nucleosides as preferred substrates. This Pyrobaculum aerophilum (strain ATCC 51768 / DSM 7523 / JCM 9630 / CIP 104966 / NBRC 100827 / IM2) protein is S-methyl-5'-thioadenosine phosphorylase.